The primary structure comprises 507 residues: Histidine ammonia-lyase (507 aa).

Positions 141–143 (ASG) form a cross-link, 5-imidazolinone (Ala-Gly). S142 is modified (2,3-didehydroalanine (Ser)).

The protein belongs to the PAL/histidase family. Post-translationally, contains an active site 4-methylidene-imidazol-5-one (MIO), which is formed autocatalytically by cyclization and dehydration of residues Ala-Ser-Gly.

It is found in the cytoplasm. The catalysed reaction is L-histidine = trans-urocanate + NH4(+). It functions in the pathway amino-acid degradation; L-histidine degradation into L-glutamate; N-formimidoyl-L-glutamate from L-histidine: step 1/3. This chain is Histidine ammonia-lyase, found in Burkholderia lata (strain ATCC 17760 / DSM 23089 / LMG 22485 / NCIMB 9086 / R18194 / 383).